A 412-amino-acid chain; its full sequence is Pyruvate dehydrogenase E1 component subunit alpha, mitochondrial (412 aa).

11 residues coordinate pyruvate: histidine 104, tyrosine 130, arginine 131, alanine 169, glycine 177, valine 179, aspartate 208, glycine 209, alanine 210, asparagine 237, and tyrosine 239. The thiamine diphosphate site is built by tyrosine 130 and arginine 131. 6 residues coordinate thiamine diphosphate: glycine 177, valine 179, aspartate 208, glycine 209, alanine 210, and asparagine 237. Aspartate 208 contributes to the Mg(2+) binding site. Mg(2+)-binding residues include asparagine 237 and tyrosine 239. Thiamine diphosphate is bound at residue histidine 304.

In terms of assembly, tetramer of 2 alpha and 2 beta subunits. The cofactor is thiamine diphosphate. Requires Mg(2+) as cofactor.

The protein resides in the mitochondrion matrix. The catalysed reaction is N(6)-[(R)-lipoyl]-L-lysyl-[protein] + pyruvate + H(+) = N(6)-[(R)-S(8)-acetyldihydrolipoyl]-L-lysyl-[protein] + CO2. E1 activity is regulated by phosphorylation (inactivation) and dephosphorylation (activation) of the alpha subunit. Its function is as follows. The pyruvate dehydrogenase complex catalyzes the overall conversion of pyruvate to acetyl-CoA and CO(2). It contains multiple copies of three enzymatic components: pyruvate dehydrogenase (E1), dihydrolipoamide acetyltransferase (E2) and lipoamide dehydrogenase (E3). The protein is Pyruvate dehydrogenase E1 component subunit alpha, mitochondrial (PDA1) of Kluyveromyces lactis (strain ATCC 8585 / CBS 2359 / DSM 70799 / NBRC 1267 / NRRL Y-1140 / WM37) (Yeast).